The primary structure comprises 189 residues: Interferon alpha-G (189 aa).

The first 23 residues, 1 to 23 (MAPAWSLLLALLLLSCNAICSLG), serve as a signal peptide directing secretion. 2 disulfide bridges follow: cysteine 24-cysteine 122 and cysteine 52-cysteine 162.

The protein belongs to the alpha/beta interferon family.

The protein localises to the secreted. In terms of biological role, produced by macrophages, IFN-alpha have antiviral activities. Interferon stimulates the production of two enzymes: a protein kinase and an oligoadenylate synthetase. The chain is Interferon alpha-G (IFNAG) from Bos taurus (Bovine).